The primary structure comprises 368 residues: MSAPAQPRERSFPSIEFTDAEADAREFPSSRSRKYNYYQPSKKRATIYEDVTVDVQPDPERHLTQGWIYGFGDGPGGYPKEWTSAQSSNWHQFLDPNEEWEQSIYRNNSAVVHQVDLCLQNAKRARAYDGWNSAWLKFIERNLGAWMHAESGMGLHVFTSIQRSAPTNMINNAVCVNAAHKLRFAQDLALFNLDLSEAEEAFDGSAHKEVWQSAPEWQPTREAVERLTAIGDWAELLFCSNIVFEQLVGSLFRSELVMQVAARNGDYITPTIVGTGEYDYDRDLNYSRALFQMLARDEKHGIDNRKLFSRWMSEWFPGASTRARGLQPIWSQPADKSVTFSSSLEHAKTKFADVLAAIDVDIPEELNK.

The segment at 1 to 33 (MSAPAQPRERSFPSIEFTDAEADAREFPSSRSR) is disordered.

The protein belongs to the TmoE/XamoE family. The propane 2-monooxygenase multicomponent enzyme system is composed of an electron transfer component and a monooxygenase component interacting with the effector protein PrmD. The electron transfer component is composed of a reductase (PrmB), and the monooxygenase component is formed by a large subunit (PrmA) and a small subunit (PrmC). Probably requires the presence of the chaperonin-like protein PrmG to ensure a productive folding, resulting of a soluble PrmC, which leads to the active form of PrmABCD.

The enzyme catalyses propane + NADH + O2 + H(+) = propan-2-ol + NAD(+) + H2O. It carries out the reaction phenol + NADH + O2 + H(+) = hydroquinone + NAD(+) + H2O. In terms of biological role, component of the propane 2-monooxygenase multicomponent enzyme system which is involved in the degradation of propane via the O2-dependent hydroxylation of propane. Under acetone induction, also able to catalyze the oxidation of phenol to yield hydroquinone. The polypeptide is Propane 2-monooxygenase, hydroxylase component small subunit (Gordonia sp. (strain TY-5)).